The chain runs to 1786 residues: Protein TIC 214 (1786 aa).

The next 6 membrane-spanning stretches (helical) occupy residues 19–39 (IINSVVVVGLYYGFLTTFSIG), 68–88 (FIAGQLMMFISIYYAPLHLAL), 91–111 (PHTITVLALPYLLFHFFWNNH), 133–153 (VFLNNLIFQLFNHFILPSSML), 176–196 (VGWLIGHILFMKWVGLVLVWI), and 227–247 (IFSILLFITCVYYLGRIPSPI). Positions 1007 to 1046 (SLSEKKIKNLIDRKKTIRNQIEEISKEKQNLTNSCTKLRY) form a coiled coil.

It belongs to the TIC214 family. In terms of assembly, part of the Tic complex. Component of the 1-MD complex, composed of TIC20-I, TIC214, TIC100 and TIC56. Interacts with the translocating preproteins. Hydrolysis of ATP is essential for the formation of this complex. The 1-MD complex interacts with TIC21.

Its subcellular location is the plastid. It is found in the chloroplast inner membrane. Its function is as follows. Involved in protein precursor import into chloroplasts. May be part of an intermediate translocation complex acting as a protein-conducting channel at the inner envelope. This chain is Protein TIC 214, found in Arabidopsis thaliana (Mouse-ear cress).